Reading from the N-terminus, the 239-residue chain is Derlin-2 (239 aa).

The Cytoplasmic portion of the chain corresponds to 1-56 (MAYQSLRLEYLQIPPVSRAYTTACVLTTAAVQLELITPFQLYFNPELIFKHFQIWR). The chain crosses the membrane as a helical span at residues 57–77 (LITNFLFFGPVGFNFLFNMIF). Over 78 to 98 (LYRYCRMLEEGSFRGRTADFV) the chain is Lumenal. A helical transmembrane segment spans residues 99–119 (FMFLFGGFLMTLFGLFVSLVF). Residues 120 to 150 (LGQAFTIMLVYVWSRRNPYVRMNFFGLLNFQ) lie on the Cytoplasmic side of the membrane. The chain crosses the membrane as a helical span at residues 151–171 (APFLPWVLMGFSLLLGNSIIV). Position 172 (aspartate 172) is a topological domain, lumenal. A helical membrane pass occupies residues 173–193 (LLGIAVGHIYFFLEDVFPNQP). Topologically, residues 194 to 239 (GGIRILKTPSILKAIFDTPDEDPNYNPLPEERPGGFAWGEGQRLGG) are cytoplasmic. The disordered stretch occupies residues 215–239 (DPNYNPLPEERPGGFAWGEGQRLGG). Residues 229 to 239 (FAWGEGQRLGG) are compositionally biased toward gly residues.

This sequence belongs to the derlin family. Forms homo- and heterooligomers with DERL3 and, to a lesser extent, with DERL1. Interacts with the SEL1L/SYVN1 and VCP/SELENOS protein complexes. Mediates association between VCP and EDEM1, as well as that between VCP and the misfolded glycoproteins. Interacts with OS9. Interacts with SELENOK and SELENOS. Interacts with the signal recognition particle/SRP and the SRP receptor; in the process of endoplasmic reticulum stress-induced pre-emptive quality control. Interacts with CCDC47.

It is found in the endoplasmic reticulum membrane. Functional component of endoplasmic reticulum-associated degradation (ERAD) for misfolded lumenal glycoproteins, but not that of misfolded nonglycoproteins. May act by forming a channel that allows the retrotranslocation of misfolded glycoproteins into the cytosol where they are ubiquitinated and degraded by the proteasome. May mediate the interaction between VCP and misfolded glycoproteins. May also be involved in endoplasmic reticulum stress-induced pre-emptive quality control, a mechanism that selectively attenuates the translocation of newly synthesized proteins into the endoplasmic reticulum and reroutes them to the cytosol for proteasomal degradation. The chain is Derlin-2 from Pongo abelii (Sumatran orangutan).